Here is a 179-residue protein sequence, read N- to C-terminus: Bacterioferritin (179 aa).

In terms of domain architecture, Ferritin-like diiron spans 1–150 (MAGNREDRKA…NIGSHIKNLG (150 aa)). Residues glutamate 23 and glutamate 56 each coordinate Fe cation. Methionine 57 provides a ligand contact to Fe-coproporphyrin III. Fe cation-binding residues include histidine 59, glutamate 99, glutamate 132, and histidine 135.

Belongs to the bacterioferritin family. As to quaternary structure, homooligomer of 24 subunits, arranged as 12 dimers, that are packed together to form an approximately spherical molecule with a central cavity, in which large amounts of iron can be deposited. The cofactor is Fe-coproporphyrin III. Fe cation is required as a cofactor.

It carries out the reaction 4 Fe(2+) + O2 + 4 H(+) = 4 Fe(3+) + 2 H2O. The enzyme catalyses Fe(2+)(in) = Fe(2+)(out). Functionally, iron-storage protein, whose ferroxidase center binds Fe(2+), oxidizes it using dioxygen to Fe(3+), and participates in the subsequent Fe(3+) oxide mineral core formation within the central cavity of the BFR protein shell. The sequence is that of Bacterioferritin (bfr) from Desulfovibrio desulfuricans (strain ATCC 27774 / DSM 6949 / MB).